The sequence spans 179 residues: ADP-ribosylation factor 1-like 1 (179 aa).

Glycine 2 is lipidated: N-myristoyl glycine. Positions 3 to 16 are important for the stable binding to the membranes; sequence LFFSKISSFMFPNI. GTP contacts are provided by residues 24–32, 126–129, and alanine 160; these read GLDGAGKTT and NKQD.

This sequence belongs to the small GTPase superfamily. Arf family.

The protein resides in the golgi apparatus membrane. The enzyme catalyses GTP + H2O = GDP + phosphate + H(+). Its activity is regulated as follows. Alternates between an inactive GDP-bound form and an active GTP-bound form. Activated by a guanine nucleotide-exchange factor (GEF) and inactivated by GTPase-activating protein (GAP). Its function is as follows. Small GTPase involved in protein trafficking between different compartments. Modulates vesicle budding and uncoating within the Golgi complex. In its GTP-bound form, triggers the recruitment of coatomer proteins to the Golgi membrane. The hydrolysis of ARF1-bound GTP, which is mediated by ARFGAPs proteins, is required for dissociation of coat proteins from Golgi membranes and vesicles. This chain is ADP-ribosylation factor 1-like 1 (arf-1.1), found in Caenorhabditis elegans.